A 601-amino-acid polypeptide reads, in one-letter code: MNITTALPLPTHLLSEKVTAPLLGARKIYITGSRQDIRVPMREIALTPSSARYGGNENLSLALYDTSGIYTDPQATIDLACGLPRLRAAWIDERADTVEAALYFKVPESVSVTAPPFPTAPRPRRARDNVAVTQLEYARRGLVTPEMEFVAIREQQRREQTVENLRGQRHAGDAWGALVGTPITPEFVRDEIARGRAILPNNINHPESEPMIIGRNFLTKINANIGTSALSSSIAEEVEKLVWAIRWGADTIMDLSTGRDIHATREWILRNSPVPVGTVPIYQALEKVGGHVEALSWAVFRDTLIEQAEQGVDYVTVHAGVLRDFIPLTASRLTGIVSRGGSIMARWCQAHRSENFLYTHFEELCEIMRAYDVAFSLGDGLRPGCIADANDAAQFAELEILGELTHIAWNHQVQVMVEGPGHVPMHLIKANMDKQLAACGEAPFYTLGPLTTDIAPGYDHITSAIGAAMIGWYGTAMLCYVTPKEHLGLPNLQDVHDGIIAYKIAAHAADLAKGHPAAQARDDALSKARFEFRWQDQFHLSLDPEKALALHDESLPKEAHKRAAFCSMCGPQFCSMKISQEVRDASSNELSDGNTNTNDAI.

Substrate contacts are provided by residues Asn-224, Met-253, Tyr-282, His-318, 338–340 (SRG), 379–382 (DGLR), and Glu-418. Residue His-422 participates in Zn(2+) binding. Tyr-445 is a substrate binding site. His-486 provides a ligand contact to Zn(2+). Residues Cys-566, Cys-569, and Cys-574 each contribute to the [4Fe-4S] cluster site.

Belongs to the ThiC family. Homodimer. [4Fe-4S] cluster serves as cofactor.

It carries out the reaction 5-amino-1-(5-phospho-beta-D-ribosyl)imidazole + S-adenosyl-L-methionine = 4-amino-2-methyl-5-(phosphooxymethyl)pyrimidine + CO + 5'-deoxyadenosine + formate + L-methionine + 3 H(+). Its pathway is cofactor biosynthesis; thiamine diphosphate biosynthesis. Catalyzes the synthesis of the hydroxymethylpyrimidine phosphate (HMP-P) moiety of thiamine from aminoimidazole ribotide (AIR) in a radical S-adenosyl-L-methionine (SAM)-dependent reaction. The protein is Phosphomethylpyrimidine synthase of Xylella fastidiosa (strain 9a5c).